Consider the following 466-residue polypeptide: Asparagine--tRNA ligase (466 aa).

Belongs to the class-II aminoacyl-tRNA synthetase family. In terms of assembly, homodimer.

The protein resides in the cytoplasm. It catalyses the reaction tRNA(Asn) + L-asparagine + ATP = L-asparaginyl-tRNA(Asn) + AMP + diphosphate + H(+). In Xylella fastidiosa (strain 9a5c), this protein is Asparagine--tRNA ligase.